We begin with the raw amino-acid sequence, 473 residues long: Sulfhydrylase-like protein lolC1 (473 aa).

K226 is modified (N6-(pyridoxal phosphate)lysine).

This sequence belongs to the trans-sulfuration enzymes family. Requires pyridoxal 5'-phosphate as cofactor.

It participates in alkaloid biosynthesis. Its function is as follows. Sulfhydrylase-like protein; part of the gene cluster that mediates the biosynthesis of loline alkaloids, potent insecticidal agents composed of a pyrrolizidine ring system and an uncommon ether bridge linking carbons 2 and 7. Lolines are structurally differentiated by the various modifications of the L-amino group and include norloline, loline, N-methylloline, N-acetylloline, N-acetylnorloline, and N-formylloline. The first committed step is the condensation of O-acetyl-L-homoserine (derived from L-aspartic acid) and L-proline, probably catalyzed by the gamma-type pyridoxal 5'-phosphate(PLP)-dependent enzyme lolC, to give the diamino diacid, NACPP. Ensuing cyclization, decarboxylation, and acetylation steps yield 1-exo-acetamidopyrrolizidine (AcAP). LolO is required for installation of the ether bridge upon the pathway intermediate, 1-exo-acetamidopyrrolizidine (AcAP). In sequential 2-oxoglutarate- and O(2)-consuming steps, lolO removes hydrogens from C2 and C7 of AcAP to form both carbon-oxygen bonds in N-acetylnorloline (NANL), the precursor to all other lolines. The enzymes lolD, lolE, lolF and lolT have also been proposed to be involved in the ether-bridge installation. Further processing of the exocyclic moiety of NANL by fungal N-acetamidase (LolN), methyltransferase (LolM), and cytochrome P450 (LolP) enzymes, with occasional involvement of a plant acetyltransferase, generates the other known lolines. LolN transforms NANL to norlonine which is monomethylated and dimethylated to respectively lonine and N-methyllonine (NML) by lolM. LolP catalyzes hydroxylation of the methyl group in N-methylloline (NML) and further oxygenation to N-formylloline (NFL). A plant acetyltransferase is responsible for the acetylation of loline to form N-acetylloline (NAL). LolA might interact with aspartate kinase to prevent feedback inhibition of its activity by these end products and thereby promote production of L-homoserine from L-aspartate. This Epichloe uncinata (Endophyte fungus) protein is Sulfhydrylase-like protein lolC1.